The sequence spans 887 residues: Endoglucanase 1 (887 aa).

A signal peptide spans 1–55 (MRLVNSLGRRKILLILAVIVAFSTVLLFAKLWGRKTSSTLDEVGSKTHGDLTAEN). A disordered region spans residues 40–66 (LDEVGSKTHGDLTAENKNGGYLPEEEI). Residues 43-53 (VGSKTHGDLTA) show a composition bias toward basic and acidic residues. The interval 56 to 518 (KNGGYLPEEE…AKMYKLYGGS (463 aa)) is catalytic. Asp131 (nucleophile) is an active-site residue. The tract at residues 441-460 (ENPPKRPHHRTAHGSWADSQ) is disordered. Residues His448, Asp486, and Glu495 contribute to the active site. The CBM3 1 domain maps to 529–684 (VPEDEIFVEA…GVLVFGREPG (156 aa)). The segment at 684-730 (GSASKSTSKDNGLSKATPTVKTESQPTAKHTQNPASDFKTPANQNSV) is disordered. The segment covering 686 to 729 (ASKSTSKDNGLSKATPTVKTESQPTAKHTQNPASDFKTPANQNS) has biased composition (polar residues). Positions 736 to 887 (IKGEVVLQYA…SNKLVYGKEP (152 aa)) constitute a CBM3 2 domain.

It belongs to the glycosyl hydrolase 9 (cellulase E) family.

It catalyses the reaction Endohydrolysis of (1-&gt;4)-beta-D-glucosidic linkages in cellulose, lichenin and cereal beta-D-glucans.. Its pathway is glycan metabolism; cellulose degradation. Functionally, this enzyme catalyzes the endohydrolysis of 1,4-beta-glucosidic linkages in cellulose, lichenin and cereal beta-D-glucans. Principally active against barley beta-glucan. The chain is Endoglucanase 1 (celI) from Acetivibrio thermocellus (strain ATCC 27405 / DSM 1237 / JCM 9322 / NBRC 103400 / NCIMB 10682 / NRRL B-4536 / VPI 7372) (Clostridium thermocellum).